Here is a 270-residue protein sequence, read N- to C-terminus: 4-hydroxy-tetrahydrodipicolinate reductase (270 aa).

Residues 9–14 and E35 contribute to the NAD(+) site; that span reads GAGGRM. R36 lines the NADP(+) pocket. NAD(+)-binding positions include 99 to 101 and 123 to 126; these read GTT and ASNF. The Proton donor/acceptor role is filled by H156. A (S)-2,3,4,5-tetrahydrodipicolinate-binding site is contributed by H157. K160 functions as the Proton donor in the catalytic mechanism. 166 to 167 lines the (S)-2,3,4,5-tetrahydrodipicolinate pocket; that stretch reads GT.

This sequence belongs to the DapB family.

The protein localises to the cytoplasm. It carries out the reaction (S)-2,3,4,5-tetrahydrodipicolinate + NAD(+) + H2O = (2S,4S)-4-hydroxy-2,3,4,5-tetrahydrodipicolinate + NADH + H(+). The enzyme catalyses (S)-2,3,4,5-tetrahydrodipicolinate + NADP(+) + H2O = (2S,4S)-4-hydroxy-2,3,4,5-tetrahydrodipicolinate + NADPH + H(+). It participates in amino-acid biosynthesis; L-lysine biosynthesis via DAP pathway; (S)-tetrahydrodipicolinate from L-aspartate: step 4/4. Functionally, catalyzes the conversion of 4-hydroxy-tetrahydrodipicolinate (HTPA) to tetrahydrodipicolinate. The polypeptide is 4-hydroxy-tetrahydrodipicolinate reductase (Haemophilus influenzae (strain 86-028NP)).